The primary structure comprises 95 residues: ESAT-6-like protein EsxH (95 aa).

The protein belongs to the WXG100 family. ESAT-6 subfamily. In terms of assembly, forms a tight 1:1 complex with EsxG.

The protein resides in the secreted. This chain is ESAT-6-like protein EsxH, found in Mycolicibacterium smegmatis (strain ATCC 700084 / mc(2)155) (Mycobacterium smegmatis).